Here is a 434-residue protein sequence, read N- to C-terminus: Beta-enolase (434 aa).

An N-acetylalanine modification is found at Ala-2. Thr-72 is subject to Phosphothreonine. A phosphoserine mark is found at Ser-83 and Ser-157. Positions 158 and 167 each coordinate substrate. Residue Ser-176 is modified to Phosphoserine. A Phosphothreonine modification is found at Thr-205. The active-site Proton donor is Glu-210. At Thr-229 the chain carries Phosphothreonine. Tyr-236 is subject to Phosphotyrosine. Asp-245 is a Mg(2+) binding site. Ser-263 carries the post-translational modification Phosphoserine. The substrate site is built by Glu-293 and Asp-318. Residues Glu-293 and Asp-318 each coordinate Mg(2+). The active-site Proton acceptor is Lys-343. Substrate-binding positions include 370–373 (SHRS) and Lys-394.

This sequence belongs to the enolase family. As to quaternary structure, mammalian enolase is composed of 3 isozyme subunits, alpha, beta and gamma, which can form homodimers or heterodimers which are cell-type and development-specific. Interacts with PNKD. The cofactor is Mg(2+). In terms of tissue distribution, the alpha/alpha homodimer is expressed in embryo and in most adult tissues. The alpha/beta heterodimer and the beta/beta homodimer are found in striated muscle, and the alpha/gamma heterodimer and the gamma/gamma homodimer in neurons.

It localises to the cytoplasm. The enzyme catalyses (2R)-2-phosphoglycerate = phosphoenolpyruvate + H2O. The protein operates within carbohydrate degradation; glycolysis; pyruvate from D-glyceraldehyde 3-phosphate: step 4/5. In terms of biological role, glycolytic enzyme that catalyzes the conversion of 2-phosphoglycerate to phosphoenolpyruvate. Appears to have a function in striated muscle development and regeneration. In Oryctolagus cuniculus (Rabbit), this protein is Beta-enolase (ENO3).